A 277-amino-acid polypeptide reads, in one-letter code: 2-dehydro-3-deoxyphosphooctonate aldolase (277 aa).

Belongs to the KdsA family.

The protein resides in the cytoplasm. The enzyme catalyses D-arabinose 5-phosphate + phosphoenolpyruvate + H2O = 3-deoxy-alpha-D-manno-2-octulosonate-8-phosphate + phosphate. The protein operates within carbohydrate biosynthesis; 3-deoxy-D-manno-octulosonate biosynthesis; 3-deoxy-D-manno-octulosonate from D-ribulose 5-phosphate: step 2/3. Its pathway is bacterial outer membrane biogenesis; lipopolysaccharide biosynthesis. The protein is 2-dehydro-3-deoxyphosphooctonate aldolase of Hydrogenovibrio crunogenus (strain DSM 25203 / XCL-2) (Thiomicrospira crunogena).